The primary structure comprises 465 residues: Myosin-6 (465 aa).

The Myosin motor domain occupies 1 to 35; the sequence is ILERGDALLVVQWNIRAFTGVKKWPWMELYFEIEP. A coiled-coil region spans residues 36–465; that stretch reads LLKSAEAEKE…YRRKLEEAQR (430 aa). Phosphoserine occurs at positions 285 and 334. Tyr456 carries the phosphotyrosine modification.

Muscle myosin is a hexameric protein that consists of 2 heavy chain subunits (MHC), 2 alkali light chain subunits (MLC) and 2 regulatory light chain subunits (MLC-2).

It localises to the cytoplasm. The protein localises to the myofibril. Muscle contraction. This Oryctolagus cuniculus (Rabbit) protein is Myosin-6 (MYH6).